Here is a 257-residue protein sequence, read N- to C-terminus: Uracil phosphoribosyltransferase (257 aa).

5-phospho-alpha-D-ribose 1-diphosphate contacts are provided by residues arginine 77, arginine 102, and 129-137; that span reads DPMLATGGS. Residues isoleucine 192 and 197–199 each bind uracil; that span reads GDA. Aspartate 198 serves as a coordination point for 5-phospho-alpha-D-ribose 1-diphosphate. Residues 203-257 are disordered; that stretch reads QFGPNLFTSSAPSRPEAPAGRGRAAAKTPGRRSARSESPSSTSPSARSRKAAPPA. Low complexity-rich tracts occupy residues 211–230 and 238–248; these read SSAP…AAKT and SESPSSTSPSA.

This sequence belongs to the UPRTase family. Requires Mg(2+) as cofactor.

The catalysed reaction is UMP + diphosphate = 5-phospho-alpha-D-ribose 1-diphosphate + uracil. It participates in pyrimidine metabolism; UMP biosynthesis via salvage pathway; UMP from uracil: step 1/1. Its activity is regulated as follows. Allosterically activated by GTP. Functionally, catalyzes the conversion of uracil and 5-phospho-alpha-D-ribose 1-diphosphate (PRPP) to UMP and diphosphate. This is Uracil phosphoribosyltransferase from Mycolicibacterium paratuberculosis (strain ATCC BAA-968 / K-10) (Mycobacterium paratuberculosis).